A 238-amino-acid polypeptide reads, in one-letter code: Ribosomal RNA small subunit methyltransferase G (238 aa).

Residues G77, F82, 128–129 (AE), and R147 each bind S-adenosyl-L-methionine.

This sequence belongs to the methyltransferase superfamily. RNA methyltransferase RsmG family.

Its subcellular location is the cytoplasm. In terms of biological role, specifically methylates the N7 position of guanine in position 535 of 16S rRNA. In Exiguobacterium sibiricum (strain DSM 17290 / CCUG 55495 / CIP 109462 / JCM 13490 / 255-15), this protein is Ribosomal RNA small subunit methyltransferase G.